We begin with the raw amino-acid sequence, 469 residues long: Ubiquitin carboxyl-terminal hydrolase MINDY-1 (469 aa).

Residues 1–85 form a disordered region; the sequence is MEYHQPEDPA…APPGPTLGTL (85 aa). Over residues 23-53 the composition is skewed to basic and acidic residues; the sequence is ENHEVLAGPDEHPQDTDARDADGEAREREPA. Low complexity predominate over residues 66–76; it reads LESPLPEASSA. Serine 103 is subject to Phosphoserine. Cysteine 137 functions as the Nucleophile in the catalytic mechanism. Catalysis depends on histidine 319, which acts as the Proton acceptor. The tract at residues 388 to 426 is ubiquitin-binding domain (UBD); that stretch reads QVDQDYLIALSLQQQQPRGPLGLTDLELAQQLQQEEYQQ. Serine 441 is modified (phosphoserine). Positions 441–469 are disordered; that stretch reads SLQGRGATSGRPAGERRQRPKHESDCILL. Residues 453–469 show a composition bias toward basic and acidic residues; it reads AGERRQRPKHESDCILL.

Belongs to the MINDY deubiquitinase family. FAM63 subfamily.

The catalysed reaction is Thiol-dependent hydrolysis of ester, thioester, amide, peptide and isopeptide bonds formed by the C-terminal Gly of ubiquitin (a 76-residue protein attached to proteins as an intracellular targeting signal).. Hydrolase that can specifically remove 'Lys-48'-linked conjugated ubiquitin from proteins. Has exodeubiquitinase activity and has a preference for long polyubiquitin chains. May play a regulatory role at the level of protein turnover. The chain is Ubiquitin carboxyl-terminal hydrolase MINDY-1 from Homo sapiens (Human).